Here is a 485-residue protein sequence, read N- to C-terminus: Glutamyl-tRNA(Gln) amidotransferase subunit A (485 aa).

Catalysis depends on charge relay system residues lysine 76 and serine 151. Serine 175 serves as the catalytic Acyl-ester intermediate.

Belongs to the amidase family. GatA subfamily. As to quaternary structure, heterotrimer of A, B and C subunits.

The enzyme catalyses L-glutamyl-tRNA(Gln) + L-glutamine + ATP + H2O = L-glutaminyl-tRNA(Gln) + L-glutamate + ADP + phosphate + H(+). Its function is as follows. Allows the formation of correctly charged Gln-tRNA(Gln) through the transamidation of misacylated Glu-tRNA(Gln) in organisms which lack glutaminyl-tRNA synthetase. The reaction takes place in the presence of glutamine and ATP through an activated gamma-phospho-Glu-tRNA(Gln). The sequence is that of Glutamyl-tRNA(Gln) amidotransferase subunit A from Thiobacillus denitrificans (strain ATCC 25259 / T1).